The primary structure comprises 77 residues: UPF0291 protein Bsph_1689 (77 aa).

It belongs to the UPF0291 family.

The protein localises to the cytoplasm. This chain is UPF0291 protein Bsph_1689, found in Lysinibacillus sphaericus (strain C3-41).